We begin with the raw amino-acid sequence, 246 residues long: 5-oxoprolinase subunit A (246 aa).

It belongs to the LamB/PxpA family. As to quaternary structure, forms a complex composed of PxpA, PxpB and PxpC.

It catalyses the reaction 5-oxo-L-proline + ATP + 2 H2O = L-glutamate + ADP + phosphate + H(+). Its function is as follows. Catalyzes the cleavage of 5-oxoproline to form L-glutamate coupled to the hydrolysis of ATP to ADP and inorganic phosphate. This chain is 5-oxoprolinase subunit A, found in Cupriavidus metallidurans (strain ATCC 43123 / DSM 2839 / NBRC 102507 / CH34) (Ralstonia metallidurans).